A 278-amino-acid chain; its full sequence is Delta(3,5)-Delta(2,4)-dienoyl-CoA isomerase, peroxisomal (278 aa).

An N-acetylmethionine modification is found at M1. Substrate contacts are provided by residues 69-73 (SGIDL) and G128. The short motif at 276-278 (AKL) is the Microbody targeting signal element.

The protein belongs to the enoyl-CoA hydratase/isomerase family. Expressed in roots, leaves, stems and flowers.

It is found in the peroxisome. The catalysed reaction is a (3E,5Z)-dienoyl-CoA = a (2E,4E)-(5,6-saturated)-dienoyl-CoA. The protein operates within lipid metabolism; fatty acid beta-oxidation. Its function is as follows. Converts 3,5-dienoyl-CoAs to the corresponding 2,4-dienoyl-CoAs. Involved in degradation of unsaturated fatty acids. This chain is Delta(3,5)-Delta(2,4)-dienoyl-CoA isomerase, peroxisomal, found in Arabidopsis thaliana (Mouse-ear cress).